A 174-amino-acid chain; its full sequence is Large ribosomal subunit protein bL12cz (174 aa).

The N-terminal 45 residues, 1–45 (MASTTFSSAFSILSLPSSSPSPPPSPPRTLPVANRRRRAAAVAST), are a transit peptide targeting the chloroplast. Positions 1–46 (MASTTFSSAFSILSLPSSSPSPPPSPPRTLPVANRRRRAAAVASTA) are disordered. The segment covering 7–18 (SSAFSILSLPSS) has biased composition (low complexity). The segment covering 19–29 (SPSPPPSPPRT) has biased composition (pro residues).

This sequence belongs to the bacterial ribosomal protein bL12 family.

It is found in the plastid. Its subcellular location is the chloroplast. The chain is Large ribosomal subunit protein bL12cz (RPL12-1) from Secale cereale (Rye).